A 459-amino-acid chain; its full sequence is UDP-glycosyltransferase 78D3 (459 aa).

Residues 338 to 340, 355 to 363, and 377 to 380 each bind UDP-alpha-D-glucose; these read APQ, HGGWNSVLE, and FGDH.

The protein belongs to the UDP-glycosyltransferase family.

Its function is as follows. Possesses low quercetin 3-O-glucosyltransferase activity in vitro. The protein is UDP-glycosyltransferase 78D3 (UGT78D3) of Arabidopsis thaliana (Mouse-ear cress).